Here is a 212-residue protein sequence, read N- to C-terminus: Sclerostin (212 aa).

The N-terminal stretch at 1–23 (MQLSLALCLVCLLVHAAFRVVEG) is a signal peptide. N52 is a glycosylation site (N-linked (GlcNAc...) asparagine). Intrachain disulfides connect C79–C133, C93–C147, C104–C164, and C108–C166. Residues 81–171 (ELHFTRYVTD…ASCKCKRLTR (91 aa)) enclose the CTCK domain. N174 carries an N-linked (GlcNAc...) asparagine glycan. The tract at residues 179-212 (KDFGPEAARPQTGRKLRPRARGTKASRAELENAY) is disordered. Basic residues predominate over residues 190–202 (TGRKLRPRARGTK).

Belongs to the sclerostin family. In terms of assembly, interacts with LRP4 (via the extracellular domain); the interaction facilitates the inhibition of Wnt signaling. Interacts with LRP5 (via the first two YWTD-EGF repeat domains); the interaction inhibits Wnt-mediated signaling. Interacts with LRP6.

It is found in the secreted. The protein localises to the extracellular space. It localises to the extracellular matrix. Functionally, negative regulator of bone growth that acts through inhibition of Wnt signaling and bone formation. In Bos taurus (Bovine), this protein is Sclerostin.